The sequence spans 55 residues: Large ribosomal subunit protein bL33 (55 aa).

The protein belongs to the bacterial ribosomal protein bL33 family.

This is Large ribosomal subunit protein bL33 from Ruegeria sp. (strain TM1040) (Silicibacter sp.).